The chain runs to 167 residues: UPF0225 protein VV1_2912 (167 aa).

The protein belongs to the UPF0225 family.

In Vibrio vulnificus (strain CMCP6), this protein is UPF0225 protein VV1_2912.